Consider the following 1414-residue polypeptide: Protein KATNIP homolog (1414 aa).

Disordered regions lie at residues 1-32, 80-116, 139-158, 712-731, 756-783, 823-861, and 924-943; these read MHGK…DEKH, QQST…PGKI, GPNT…NEDQ, VSAT…NDLT, SSSS…TFTN, KMDN…SEKY, and QQQK…SLMP. Composition is skewed to basic and acidic residues over residues 10 to 32 and 86 to 101; these read RKND…DEKH and LARE…DDGC. The segment covering 147-158 has biased composition (acidic residues); sequence DFESDDDMNEDQ. Composition is skewed to polar residues over residues 832–843 and 924–940; these read NFSNQSSYNSDR and QQQK…NGSS.

It localises to the cytoplasm. Its subcellular location is the cytoskeleton. The protein resides in the cilium axoneme. It is found in the cilium basal body. May control cilium integrity. This Xenopus laevis (African clawed frog) protein is Protein KATNIP homolog.